A 226-amino-acid polypeptide reads, in one-letter code: ATP synthase F(0) complex subunit a (226 aa).

6 consecutive transmembrane segments (helical) span residues 6–26 (FAPF…IMIF), 68–88 (WTLM…LGLL), 97–117 (QLSM…LMGF), 138–158 (IPML…ALAV), 164–184 (ITAG…LSSI), and 193–213 (FTIL…QAYV).

This sequence belongs to the ATPase A chain family. Component of the ATP synthase complex composed at least of ATP5F1A/subunit alpha, ATP5F1B/subunit beta, ATP5MC1/subunit c (homooctomer), MT-ATP6/subunit a, MT-ATP8/subunit 8, ATP5ME/subunit e, ATP5MF/subunit f, ATP5MG/subunit g, ATP5MK/subunit k, ATP5MJ/subunit j, ATP5F1C/subunit gamma, ATP5F1D/subunit delta, ATP5F1E/subunit epsilon, ATP5PF/subunit F6, ATP5PB/subunit b, ATP5PD/subunit d, ATP5PO/subunit OSCP. ATP synthase complex consists of a soluble F(1) head domain (subunits alpha(3) and beta(3)) - the catalytic core - and a membrane F(0) domain - the membrane proton channel (subunits c, a, 8, e, f, g, k and j). These two domains are linked by a central stalk (subunits gamma, delta, and epsilon) rotating inside the F1 region and a stationary peripheral stalk (subunits F6, b, d, and OSCP). Interacts with DNAJC30; interaction is direct.

It localises to the mitochondrion inner membrane. It carries out the reaction H(+)(in) = H(+)(out). Functionally, subunit a, of the mitochondrial membrane ATP synthase complex (F(1)F(0) ATP synthase or Complex V) that produces ATP from ADP in the presence of a proton gradient across the membrane which is generated by electron transport complexes of the respiratory chain. ATP synthase complex consist of a soluble F(1) head domain - the catalytic core - and a membrane F(1) domain - the membrane proton channel. These two domains are linked by a central stalk rotating inside the F(1) region and a stationary peripheral stalk. During catalysis, ATP synthesis in the catalytic domain of F(1) is coupled via a rotary mechanism of the central stalk subunits to proton translocation. With the subunit c (ATP5MC1), forms the proton-conducting channel in the F(0) domain, that contains two crucial half-channels (inlet and outlet) that facilitate proton movement from the mitochondrial intermembrane space (IMS) into the matrix. Protons are taken up via the inlet half-channel and released through the outlet half-channel, following a Grotthuss mechanism. The chain is ATP synthase F(0) complex subunit a from Ornithorhynchus anatinus (Duckbill platypus).